The following is a 162-amino-acid chain: Endoribonuclease YbeY (162 aa).

His-117, His-121, and His-127 together coordinate Zn(2+).

It belongs to the endoribonuclease YbeY family. It depends on Zn(2+) as a cofactor.

It localises to the cytoplasm. Its function is as follows. Single strand-specific metallo-endoribonuclease involved in late-stage 70S ribosome quality control and in maturation of the 3' terminus of the 16S rRNA. This chain is Endoribonuclease YbeY, found in Francisella tularensis subsp. novicida (strain U112).